A 357-amino-acid chain; its full sequence is MQKESIYGLTREQLVDWFLAHGEKKFRATQVWEWLYTKRVASFSEMSNISKSLMTLLEENFSLNPLKQVIVQEAQDGTVKYLFELPDKNMIETVLMRQEYGLSVCVTTQVGCNIGCTFCASGLLKKQRDLTAGEIVAQIMWVQHYFDERGLDERVSHVVVMGIGEPFDNYANVMNFLRTINDDKGLAIGARHITVSTSGLVPKIREFADSGLQVNLAISLHAPNNEVRTSIMRINRSFPIEKLMAAIDEYIEKTNRRVTFEYIMLSQVNDRPEHAQQLADLLRNKKKLSYVNLIPYNPVSEHDQYSRSSKEAVLKFYDVLKKNGINCVIRKEHGTDIDAACGQLRSKQMKKEKVKNQ.

Glu-92 serves as the catalytic Proton acceptor. Residues 98-330 (QEYGLSVCVT…KKNGINCVIR (233 aa)) enclose the Radical SAM core domain. A disulfide bond links Cys-105 and Cys-341. The [4Fe-4S] cluster site is built by Cys-112, Cys-116, and Cys-119. Residues 164–165 (GE), Ser-196, 219–221 (SLH), and Asn-297 each bind S-adenosyl-L-methionine. The S-methylcysteine intermediate role is filled by Cys-341.

This sequence belongs to the radical SAM superfamily. RlmN family. [4Fe-4S] cluster is required as a cofactor.

It localises to the cytoplasm. The enzyme catalyses adenosine(2503) in 23S rRNA + 2 reduced [2Fe-2S]-[ferredoxin] + 2 S-adenosyl-L-methionine = 2-methyladenosine(2503) in 23S rRNA + 5'-deoxyadenosine + L-methionine + 2 oxidized [2Fe-2S]-[ferredoxin] + S-adenosyl-L-homocysteine. It carries out the reaction adenosine(37) in tRNA + 2 reduced [2Fe-2S]-[ferredoxin] + 2 S-adenosyl-L-methionine = 2-methyladenosine(37) in tRNA + 5'-deoxyadenosine + L-methionine + 2 oxidized [2Fe-2S]-[ferredoxin] + S-adenosyl-L-homocysteine. Functionally, specifically methylates position 2 of adenine 2503 in 23S rRNA and position 2 of adenine 37 in tRNAs. The sequence is that of Probable dual-specificity RNA methyltransferase RlmN from Enterococcus faecalis (strain ATCC 700802 / V583).